Consider the following 1071-residue polypeptide: Kinesin-like protein KIN-14J (1071 aa).

One can recognise a Calponin-homology (CH) domain in the interval 39–142 (KKGHQSLVEW…SLKALKASFS (104 aa)). The disordered stretch occupies residues 157–181 (WSLPEDHSDSRGDDRNFTDGFQSKE). Positions 158–173 (SLPEDHSDSRGDDRNF) are enriched in basic and acidic residues. The stretch at 299-389 (EKTRIEEKER…ELEKLCQSKS (91 aa)) forms a coiled coil. Positions 472-800 (NIRVYCRIRP…LKFAERVSGV (329 aa)) constitute a Kinesin motor domain. 556–563 (GQTGSGKT) is a binding site for ATP. Residues 811–844 (GRDVRQLMEQVSNLKDVIAKKDEELQNFQKVKGN) are a coiled coil. Disordered stretches follow at residues 852–931 (GLSN…AAKG) and 995–1071 (ARMT…NRRR). Basic and acidic residues-rich tracts occupy residues 910–921 (SDERKHQKDYHQ) and 995–1017 (ARMT…KDRT). Positions 1034-1049 (TRPSRLSIATSSSSKA) are enriched in polar residues.

Belongs to the TRAFAC class myosin-kinesin ATPase superfamily. Kinesin family. KIN-14 subfamily.

The chain is Kinesin-like protein KIN-14J from Arabidopsis thaliana (Mouse-ear cress).